The primary structure comprises 313 residues: Cytochrome c biogenesis protein CcsA (313 aa).

8 helical membrane passes run 9-29 (ILTHISFSIVSIVITIHLITF), 44-64 (GIIVTFFCITGLLVTRWVSSG), 71-91 (LYESLIFLSWSFSLIHIIPYF), 111-131 (GFATSGILTEIHQSGILVPAL), 143-163 (MILGYAALLCGSLLSVALLVI), 217-237 (VISLGFTFLTIGILSGAVWAN), 244-264 (WNWDPKETWAFITWIVFAIYL), and 278-298 (AIVASIGFLIIWICYFGVNLL).

The protein belongs to the CcmF/CycK/Ccl1/NrfE/CcsA family. May interact with Ccs1.

The protein resides in the plastid. It localises to the chloroplast thylakoid membrane. Functionally, required during biogenesis of c-type cytochromes (cytochrome c6 and cytochrome f) at the step of heme attachment. The chain is Cytochrome c biogenesis protein CcsA from Solanum lycopersicum (Tomato).